The following is a 160-amino-acid chain: NADH-quinone oxidoreductase subunit B (160 aa).

Residues Cys-37, Cys-38, Cys-102, and Cys-132 each coordinate [4Fe-4S] cluster.

The protein belongs to the complex I 20 kDa subunit family. NDH-1 is composed of 14 different subunits. Subunits NuoB, C, D, E, F, and G constitute the peripheral sector of the complex. The cofactor is [4Fe-4S] cluster.

Its subcellular location is the cell inner membrane. It carries out the reaction a quinone + NADH + 5 H(+)(in) = a quinol + NAD(+) + 4 H(+)(out). Its function is as follows. NDH-1 shuttles electrons from NADH, via FMN and iron-sulfur (Fe-S) centers, to quinones in the respiratory chain. Couples the redox reaction to proton translocation (for every two electrons transferred, four hydrogen ions are translocated across the cytoplasmic membrane), and thus conserves the redox energy in a proton gradient. This is NADH-quinone oxidoreductase subunit B from Cupriavidus metallidurans (strain ATCC 43123 / DSM 2839 / NBRC 102507 / CH34) (Ralstonia metallidurans).